We begin with the raw amino-acid sequence, 208 residues long: ATP-dependent Clp protease proteolytic subunit (208 aa).

The Nucleophile role is filled by S106. The active site involves H131.

The protein belongs to the peptidase S14 family. Fourteen ClpP subunits assemble into 2 heptameric rings which stack back to back to give a disk-like structure with a central cavity, resembling the structure of eukaryotic proteasomes.

It is found in the cytoplasm. It carries out the reaction Hydrolysis of proteins to small peptides in the presence of ATP and magnesium. alpha-casein is the usual test substrate. In the absence of ATP, only oligopeptides shorter than five residues are hydrolyzed (such as succinyl-Leu-Tyr-|-NHMec, and Leu-Tyr-Leu-|-Tyr-Trp, in which cleavage of the -Tyr-|-Leu- and -Tyr-|-Trp bonds also occurs).. Functionally, cleaves peptides in various proteins in a process that requires ATP hydrolysis. Has a chymotrypsin-like activity. Plays a major role in the degradation of misfolded proteins. The chain is ATP-dependent Clp protease proteolytic subunit from Roseobacter denitrificans (strain ATCC 33942 / OCh 114) (Erythrobacter sp. (strain OCh 114)).